The sequence spans 322 residues: 4-hydroxy-3-methylbut-2-enyl diphosphate reductase (322 aa).

Cysteine 15 serves as a coordination point for [4Fe-4S] cluster. Histidine 44 and histidine 77 together coordinate (2E)-4-hydroxy-3-methylbut-2-enyl diphosphate. Positions 44 and 77 each coordinate dimethylallyl diphosphate. Positions 44 and 77 each coordinate isopentenyl diphosphate. Residue cysteine 99 coordinates [4Fe-4S] cluster. Residue histidine 127 coordinates (2E)-4-hydroxy-3-methylbut-2-enyl diphosphate. Histidine 127 lines the dimethylallyl diphosphate pocket. Isopentenyl diphosphate is bound at residue histidine 127. The Proton donor role is filled by glutamate 129. A (2E)-4-hydroxy-3-methylbut-2-enyl diphosphate-binding site is contributed by threonine 168. Cysteine 198 serves as a coordination point for [4Fe-4S] cluster. (2E)-4-hydroxy-3-methylbut-2-enyl diphosphate is bound by residues serine 226, serine 227, asparagine 228, and serine 270. Serine 226, serine 227, asparagine 228, and serine 270 together coordinate dimethylallyl diphosphate. Positions 226, 227, 228, and 270 each coordinate isopentenyl diphosphate.

This sequence belongs to the IspH family. The cofactor is [4Fe-4S] cluster.

The enzyme catalyses isopentenyl diphosphate + 2 oxidized [2Fe-2S]-[ferredoxin] + H2O = (2E)-4-hydroxy-3-methylbut-2-enyl diphosphate + 2 reduced [2Fe-2S]-[ferredoxin] + 2 H(+). The catalysed reaction is dimethylallyl diphosphate + 2 oxidized [2Fe-2S]-[ferredoxin] + H2O = (2E)-4-hydroxy-3-methylbut-2-enyl diphosphate + 2 reduced [2Fe-2S]-[ferredoxin] + 2 H(+). Its pathway is isoprenoid biosynthesis; dimethylallyl diphosphate biosynthesis; dimethylallyl diphosphate from (2E)-4-hydroxy-3-methylbutenyl diphosphate: step 1/1. The protein operates within isoprenoid biosynthesis; isopentenyl diphosphate biosynthesis via DXP pathway; isopentenyl diphosphate from 1-deoxy-D-xylulose 5-phosphate: step 6/6. Catalyzes the conversion of 1-hydroxy-2-methyl-2-(E)-butenyl 4-diphosphate (HMBPP) into a mixture of isopentenyl diphosphate (IPP) and dimethylallyl diphosphate (DMAPP). Acts in the terminal step of the DOXP/MEP pathway for isoprenoid precursor biosynthesis. This chain is 4-hydroxy-3-methylbut-2-enyl diphosphate reductase, found in Neisseria meningitidis serogroup C (strain 053442).